The following is a 115-amino-acid chain: Cobalt-zinc-cadmium resistance protein CzcI (115 aa).

Residues 1–20 (MRRFVLIFVLLILPFQFSWA) form the signal peptide. Residues 93–102 (QHSSEFSSLN) show a composition bias toward polar residues. Positions 93–115 (QHSSEFSSLNARAPDRPQWQRLA) are disordered.

The protein resides in the periplasm. Component of the czc cation-efflux system that confers resistance to cobalt, zinc and cadmium. May have a regulatory function. The protein is Cobalt-zinc-cadmium resistance protein CzcI (czcI) of Cupriavidus metallidurans (strain ATCC 43123 / DSM 2839 / NBRC 102507 / CH34) (Ralstonia metallidurans).